We begin with the raw amino-acid sequence, 723 residues long: Fatty acid oxidation complex subunit alpha (723 aa).

The enoyl-CoA hydratase/isomerase stretch occupies residues 1 to 189 (MIYQAKTLQV…KVGLLDAIVD (189 aa)). D296 lines the substrate pocket. A 3-hydroxyacyl-CoA dehydrogenase region spans residues 311 to 723 (SQDTQHAAVL…FYSAQQVSAL (413 aa)). NAD(+)-binding positions include M325, D344, 401 to 403 (VVE), K408, and S430. The active-site For 3-hydroxyacyl-CoA dehydrogenase activity is H451. N454 contributes to the NAD(+) binding site. The substrate site is built by N501 and Y661.

It in the N-terminal section; belongs to the enoyl-CoA hydratase/isomerase family. In the C-terminal section; belongs to the 3-hydroxyacyl-CoA dehydrogenase family. As to quaternary structure, heterotetramer of two alpha chains (FadB) and two beta chains (FadA).

The enzyme catalyses a (3S)-3-hydroxyacyl-CoA + NAD(+) = a 3-oxoacyl-CoA + NADH + H(+). It carries out the reaction a (3S)-3-hydroxyacyl-CoA = a (2E)-enoyl-CoA + H2O. It catalyses the reaction a 4-saturated-(3S)-3-hydroxyacyl-CoA = a (3E)-enoyl-CoA + H2O. The catalysed reaction is (3S)-3-hydroxybutanoyl-CoA = (3R)-3-hydroxybutanoyl-CoA. The enzyme catalyses a (3Z)-enoyl-CoA = a 4-saturated (2E)-enoyl-CoA. It carries out the reaction a (3E)-enoyl-CoA = a 4-saturated (2E)-enoyl-CoA. It functions in the pathway lipid metabolism; fatty acid beta-oxidation. Its function is as follows. Involved in the aerobic and anaerobic degradation of long-chain fatty acids via beta-oxidation cycle. Catalyzes the formation of 3-oxoacyl-CoA from enoyl-CoA via L-3-hydroxyacyl-CoA. It can also use D-3-hydroxyacyl-CoA and cis-3-enoyl-CoA as substrate. The protein is Fatty acid oxidation complex subunit alpha of Vibrio cholerae serotype O1 (strain ATCC 39315 / El Tor Inaba N16961).